The sequence spans 393 residues: Putative zinc metalloprotease Rip3 (393 aa).

The next 2 membrane-spanning stretches (helical) occupy residues 10-30 (IAGF…LFTW) and 45-65 (AVVY…SLLA). H66 is a binding site for Zn(2+). E67 is an active-site residue. Residue H70 participates in Zn(2+) binding. Helical transmembrane passes span 77 to 97 (AGVS…ALGG), 108 to 128 (IAFA…ALAI), 136 to 156 (PAIV…LGLF), and 207 to 227 (FVAG…FIFA). 2 CBS domains span residues 251–308 (MTAQ…RRST) and 315–376 (ALPL…AQPE).

It belongs to the peptidase M50B family. Zn(2+) is required as a cofactor.

It is found in the cell membrane. The protein is Putative zinc metalloprotease Rip3 (rip3) of Mycobacterium tuberculosis (strain ATCC 35801 / TMC 107 / Erdman).